The sequence spans 228 residues: HTH-type transcriptional regulator ArcR (228 aa).

A nucleoside 3',5'-cyclic phosphate is bound at residue 22-141 (SYINIPVGVL…VKLFSLLSET (120 aa)). An HTH crp-type domain is found at 155–228 (KLAKERVTKI…SKNWLVSKDL (74 aa)). A DNA-binding region (H-T-H motif) is located at residues 188–207 (IQLLSDMAGISRETTSHIIN).

The protein resides in the cytoplasm. In terms of biological role, positively regulates the expression of the arcABDCR operon under anaerobic conditions, thus playing an essential role in arginine catabolism. May also control the expression of genes encoding proteins which are involved in anaerobic metabolism. Can bind cyclic AMP. The chain is HTH-type transcriptional regulator ArcR (arcR) from Staphylococcus epidermidis (strain ATCC 12228 / FDA PCI 1200).